Reading from the N-terminus, the 54-residue chain is UPF0391 membrane protein RC1_1636 (54 aa).

2 helical membrane-spanning segments follow: residues 3 to 23 (YWALIFFVVALVAGVLGFGGI) and 30 to 50 (IAQILFFIFLVIFVVSLIMGL).

Belongs to the UPF0391 family.

Its subcellular location is the cell membrane. The chain is UPF0391 membrane protein RC1_1636 from Rhodospirillum centenum (strain ATCC 51521 / SW).